A 223-amino-acid chain; its full sequence is MAGDRNRHCELEQEKYDTHENVKIICLGDSAVGKSKLMERFLMDGFQPQQLSTYALTLYKHTATVDGKTILVDFWDTAGQERFQSMHASYYHKAHACIMVFDVQRKITYKNLGTWYAELREFRPEIPCILVANKIDADIQMTQKNFSFAKKFSLPLYFVSAADGTNVVKLFNDAIRLAVAYKESSQDFMDEVLQELENFKLEQKEEDTSGQEQSDTTKSPSPS.

GTP contacts are provided by residues 28 to 35, 76 to 80, and 133 to 136; these read GDSAVGKS, DTAGQ, and NKID. The tract at residues 200–223 is disordered; it reads KLEQKEEDTSGQEQSDTTKSPSPS. Over residues 210–223 the composition is skewed to polar residues; it reads GQEQSDTTKSPSPS.

This sequence belongs to the small GTPase superfamily. Rab family. As to quaternary structure, interacts with IFT27, IFT81, IFT172, ATP6V1E1, HK1, LDHC, MAPRE1 and HSPA2. In terms of tissue distribution, isoform 2 is expressed in the testis and localizes to the mid-piece of the sperm tail (at protein level). Isoform 2 is expressed at higher levels in testis than isoform 1. Isoform 1 and isoform 2 are widely expressed and notably within other tissues containing motile cilia including the lung, trachea, brain, ovary and kidney.

In terms of biological role, plays an essential role in male fertility, sperm intra-flagellar transport, and tail assembly. Binds, in a GTP-regulated manner, to a specific set of effector proteins including key proteins involved in cilia development and function and delivers them into the growing sperm tail. This chain is Rab-like protein 2A (Rabl2), found in Mus musculus (Mouse).